We begin with the raw amino-acid sequence, 175 residues long: Protein LHCP TRANSLOCATION DEFECT (175 aa).

Residues 1 to 68 (MASSSISFSC…WFKFGKNGVD (68 aa)) constitute a chloroplast transit peptide. The stretch at 117–149 (PVDILLMLAATEGDRPKIEELLKAGADYSVKDA) is one ANK repeat.

In terms of assembly, interacts with CAO/cpSRP43, but is not a component of the transit complex. Interacts with LHCP (via T14 domain), TIC40 and TIC110. In terms of tissue distribution, highly expressed in leaves and seedlings. Detected in roots, but not in germinating seeds.

The protein resides in the plastid. The protein localises to the chloroplast thylakoid membrane. Its subcellular location is the chloroplast envelope. It is found in the chloroplast stroma. Involved in the import of light-harvesting complex proteins (LHCP) and subsequent routing of these proteins to the chloroplast signal recognition particle (SRP) pathway. The sequence is that of Protein LHCP TRANSLOCATION DEFECT (LTD) from Arabidopsis thaliana (Mouse-ear cress).